A 533-amino-acid polypeptide reads, in one-letter code: L-aspartate oxidase (533 aa).

FAD-binding positions include 16 to 19 (SGAA), Lys-38, 45 to 52 (ATFYAQGG), and Asp-223. The active-site Proton donor/acceptor is the Arg-290. Residues Glu-375 and 391 to 392 (SL) each bind FAD.

Belongs to the FAD-dependent oxidoreductase 2 family. NadB subfamily. FAD is required as a cofactor.

Its subcellular location is the cytoplasm. The catalysed reaction is L-aspartate + O2 = iminosuccinate + H2O2. It participates in cofactor biosynthesis; NAD(+) biosynthesis; iminoaspartate from L-aspartate (oxidase route): step 1/1. Catalyzes the oxidation of L-aspartate to iminoaspartate, the first step in the de novo biosynthesis of NAD(+). This is L-aspartate oxidase (nadB) from Yersinia pestis.